The following is a 660-amino-acid chain: MKAVIFAYHDMGCQGVQAVLDAGYEIAAIFTHADNPAENTFFGSVSRLAAGLGIPVYAPDNVNHPIWVDRIAELAPDIIFSFYYRNLLSEEILHLAPAGAFNLHGSLLPAYRGRAPLNWVLVNGESETGVTLHRMVKRADAGEIVASQRVAIAQDDVALTLHHKLCQAARQLLNSILPTMKCGDIPSVPQRESDATYYGRRRPEDGLIDWHKPVSTVHNLVRAVAAPWPGAFSYNGSQKFTIWSSRICPDAQGVLPGSVISVSPLRVACADGALEIITGQAGDGITVQGSQLAQTLGLVAGARLNRPPATSGKRRIRVLILGVNGFIGNHLTERLLNEENYEVYGMDIGSNAISRFLLHPRFHFVEGDISIHSEWIEYHVKKCDVVLPLVAIATPIEYTRNPLRVFELDFEENLRIIRYCVKYRKRVVFPSTSEVYGMCTDASFDEDKSNLIVGPVNKPRWIYSVSKQLLDRVIWAYGEKEGLRFTLFRPFNWMGPRLDSLSAARIGSSRAITQLILNLVEGTPIKLIDGGQQKRCFTDIRDGIEALFRIIVNEGDRCDGKIINIGNPDNEASIQELATLLLDSFDKHPLRCHFPPFAGFQVVASRSYYGKGYQDVAHRKPSIDNARRCLGWEPSIAMRDTVEETLDFFLRSVDVAERAS.

Residues 1 to 304 are formyltransferase ArnAFT; that stretch reads MKAVIFAYHD…TLGLVAGARL (304 aa). Histidine 104 (proton donor; for formyltransferase activity) is an active-site residue. (6R)-10-formyltetrahydrofolate contacts are provided by residues arginine 114 and 136-140; that span reads VKRAD. The dehydrogenase ArnADH stretch occupies residues 314-660; that stretch reads RRIRVLILGV…RSVDVAERAS (347 aa). Residues aspartate 347 and 368–369 contribute to the NAD(+) site; that span reads DI. UDP-alpha-D-glucuronate-binding positions include alanine 393, tyrosine 398, and 432 to 433; that span reads TS. Residue glutamate 434 is the Proton acceptor; for decarboxylase activity of the active site. UDP-alpha-D-glucuronate-binding positions include arginine 460, asparagine 492, 526–535, and tyrosine 613; that span reads KLIDGGQQKR. Arginine 619 acts as the Proton donor; for decarboxylase activity in catalysis.

This sequence in the N-terminal section; belongs to the Fmt family. UDP-L-Ara4N formyltransferase subfamily. It in the C-terminal section; belongs to the NAD(P)-dependent epimerase/dehydratase family. UDP-glucuronic acid decarboxylase subfamily. As to quaternary structure, homohexamer, formed by a dimer of trimers.

The catalysed reaction is UDP-alpha-D-glucuronate + NAD(+) = UDP-beta-L-threo-pentopyranos-4-ulose + CO2 + NADH. It carries out the reaction UDP-4-amino-4-deoxy-beta-L-arabinose + (6R)-10-formyltetrahydrofolate = UDP-4-deoxy-4-formamido-beta-L-arabinose + (6S)-5,6,7,8-tetrahydrofolate + H(+). It functions in the pathway nucleotide-sugar biosynthesis; UDP-4-deoxy-4-formamido-beta-L-arabinose biosynthesis; UDP-4-deoxy-4-formamido-beta-L-arabinose from UDP-alpha-D-glucuronate: step 1/3. Its pathway is nucleotide-sugar biosynthesis; UDP-4-deoxy-4-formamido-beta-L-arabinose biosynthesis; UDP-4-deoxy-4-formamido-beta-L-arabinose from UDP-alpha-D-glucuronate: step 3/3. It participates in bacterial outer membrane biogenesis; lipopolysaccharide biosynthesis. Bifunctional enzyme that catalyzes the oxidative decarboxylation of UDP-glucuronic acid (UDP-GlcUA) to UDP-4-keto-arabinose (UDP-Ara4O) and the addition of a formyl group to UDP-4-amino-4-deoxy-L-arabinose (UDP-L-Ara4N) to form UDP-L-4-formamido-arabinose (UDP-L-Ara4FN). The modified arabinose is attached to lipid A and is required for resistance to polymyxin and cationic antimicrobial peptides. The polypeptide is Bifunctional polymyxin resistance protein ArnA (Salmonella choleraesuis (strain SC-B67)).